Reading from the N-terminus, the 117-residue chain is Large ribosomal subunit protein uL18 (117 aa).

Belongs to the universal ribosomal protein uL18 family. Part of the 50S ribosomal subunit; part of the 5S rRNA/L5/L18/L25 subcomplex. Contacts the 5S and 23S rRNAs.

Functionally, this is one of the proteins that bind and probably mediate the attachment of the 5S RNA into the large ribosomal subunit, where it forms part of the central protuberance. This chain is Large ribosomal subunit protein uL18, found in Coxiella burnetii (strain CbuK_Q154) (Coxiella burnetii (strain Q154)).